The primary structure comprises 677 residues: DNA gyrase subunit B, novobiocin-resistant (677 aa).

Residues 1-23 are disordered; the sequence is MTTYDTRTATDTRGSEQPGHVGT. The tract at residues 154–295 is novobiocin-binding; the sequence is IWTDGHRWTQ…RLLSAEIALQ (142 aa). The Toprim domain occupies 456–570; that stretch reads SEIFIVEGDS…EGHVHLSRPP (115 aa). Mg(2+)-binding residues include Glu-462, Asp-535, and Asp-537.

This sequence belongs to the type II topoisomerase GyrB family. Heterotetramer, composed of two GyrA and two GyrB chains. In the heterotetramer, GyrA contains the active site tyrosine that forms a transient covalent intermediate with DNA, while GyrB binds cofactors and catalyzes ATP hydrolysis. Requires Mg(2+) as cofactor. Mn(2+) is required as a cofactor. It depends on Ca(2+) as a cofactor.

Its subcellular location is the cytoplasm. It carries out the reaction ATP-dependent breakage, passage and rejoining of double-stranded DNA.. In terms of biological role, a type II topoisomerase that negatively supercoils closed circular double-stranded (ds) DNA in an ATP-dependent manner to modulate DNA topology and maintain chromosomes in an underwound state. Negative supercoiling favors strand separation, and DNA replication, transcription, recombination and repair, all of which involve strand separation. Also able to catalyze the interconversion of other topological isomers of dsDNA rings, including catenanes and knotted rings. Type II topoisomerases break and join 2 DNA strands simultaneously in an ATP-dependent manner. The chain is DNA gyrase subunit B, novobiocin-resistant from Streptomyces niveus (Streptomyces spheroides).